Consider the following 329-residue polypeptide: Peroxidase 18 (329 aa).

Residues 1–29 form the signal peptide; the sequence is MALQFFSCKPKYTFLSSLLLLLLLSSSVA. 4 disulfides stabilise this stretch: Cys-40/Cys-116, Cys-73/Cys-78, Cys-122/Cys-325, and Cys-201/Cys-235. His-71 acts as the Proton acceptor in catalysis. Asp-72, Val-75, Gly-77, Asp-79, and Ser-81 together coordinate Ca(2+). Asn-87 is a glycosylation site (N-linked (GlcNAc...) asparagine). Ile-164 is a binding site for substrate. His-194 is a binding site for heme b. A Ca(2+)-binding site is contributed by Thr-195. Ca(2+) is bound by residues Asp-249, Thr-252, and Asp-257.

It belongs to the peroxidase family. Classical plant (class III) peroxidase subfamily. Heme b serves as cofactor. It depends on Ca(2+) as a cofactor.

The protein localises to the secreted. It carries out the reaction 2 a phenolic donor + H2O2 = 2 a phenolic radical donor + 2 H2O. In terms of biological role, removal of H(2)O(2), oxidation of toxic reductants, biosynthesis and degradation of lignin, suberization, auxin catabolism, response to environmental stresses such as wounding, pathogen attack and oxidative stress. These functions might be dependent on each isozyme/isoform in each plant tissue. The protein is Peroxidase 18 (PER18) of Arabidopsis thaliana (Mouse-ear cress).